A 356-amino-acid chain; its full sequence is HORMA domain-containing protein 1 (356 aa).

Positions Gln24 to Val225 constitute an HORMA domain. 2 disordered regions span residues Glu282–Asp305 and Gln333–Lys356. Positions Glu288–Phe298 are enriched in basic and acidic residues. Residues Pro347–Lys356 are compositionally biased toward basic residues.

It localises to the nucleus. The protein localises to the chromosome. In terms of biological role, plays a key role in meiotic progression by ensuring that sufficient numbers of processed DNA double-strand breaks (DSBs) are available for successful homology search, promoting synaptonemal-complex formation independently and playing key role in the male mid-pachytene checkpoint and the female meiotic prophase checkpoint. The polypeptide is HORMA domain-containing protein 1 (hormad1) (Danio rerio (Zebrafish)).